The chain runs to 629 residues: MSLNTKLALPIALGLSLVTVTAFVAYYVLKRDEEENDNKTVKITKINTIEIHVPKSIVPALIGRNGSNIKDLQKKSGAQIHFKKFTDQDYDVCVVRGRADTTQLAETLIHDFIKQQPTIMSESITVPSWSCGRIIGSGGENVNDISHRSGARVKVESPKSTDKVAEHLVTFRGTKEQIEVAKKLVENCVSLERCRREIEQSKRPPRHSSSPPSPCPSPGDRDADADAQGDVDHTRVKYKRPETTGPSIEVYVSAVSSPSRFWVQFVGPQVAQLDDLVAHMTEYYSKKENREAHTLRHVSVGQVVAAVFRHDGRWYRARVHDIRPNEFDSSQQVADVFYLDYGDSEYVATHELCELRADLLRLRFQAMECFLAGVRPASGEEAVSPSGQTWDKWHPQAVERFEELTQVARWKALVSRTCTYKKTATAEGEKDKEIPGIKLFDVTDEGELDVGAVLVAEGWAVAGPAPSPRPSPPRGHTTPFGDLSKSKVLSMTGGGGRSSSVPKDHKDDGSNVLTVEGDDSKDKDGITASKSLASGLEKSDRHPLSISNFDLSYPDPSRNKQLNGSDDFLHGERQNIDNEITIDTLVPPSPLSNAPILSKTLQDEFKANMNRIDSHHSNLENLGKSAFEK.

The helical transmembrane segment at 9–29 threads the bilayer; it reads LPIALGLSLVTVTAFVAYYVL. KH domains follow at residues 46-109 and 119-185; these read INTI…ETLI and IMSE…KKLV. Residues 198–240 are disordered; sequence IEQSKRPPRHSSSPPSPCPSPGDRDADADAQGDVDHTRVKYKR. Residues 219–240 are compositionally biased toward basic and acidic residues; that stretch reads GDRDADADAQGDVDHTRVKYKR. The Tudor domain occupies 297–362; it reads HVSVGQVVAA…CELRADLLRL (66 aa). The interval 464–526 is disordered; the sequence is PAPSPRPSPP…GDDSKDKDGI (63 aa).

The protein belongs to the Tdrkh family. In terms of assembly, interacts with (symmetrically methylated) Siwi. Interacts with (symmetrically methylated) Ago3. Interacts with PNLDC1/trimmer; interaction takes place on the mitochondrial surface and recruits PNLDC1/trimmer to Siwi-bound pre-piRNAs.

It is found in the mitochondrion outer membrane. Functionally, participates in the primary piRNA biogenesis pathway and is required during spermatogenesis to repress transposable elements and prevent their mobilization, which is essential for the germline integrity. The piRNA metabolic process mediates the repression of transposable elements during meiosis by forming complexes composed of piRNAs and Piwi proteins (Siwi or Ago3) and govern the methylation and subsequent repression of transposons. Required for the final steps of primary piRNA biogenesis by participating in the processing of 31-37 nt intermediates into mature piRNAs: acts by recruiting the exonuclease PNLDC1/trimmer to Siwi-bound pre-piRNAs. This Bombyx mori (Silk moth) protein is Tudor and KH domain-containing protein homolog.